Consider the following 312-residue polypeptide: Ribonuclease Z (312 aa).

Positions 63, 65, 67, 68, 140, 211, and 269 each coordinate Zn(2+). D67 acts as the Proton acceptor in catalysis.

It belongs to the RNase Z family. In terms of assembly, homodimer. Zn(2+) is required as a cofactor.

It catalyses the reaction Endonucleolytic cleavage of RNA, removing extra 3' nucleotides from tRNA precursor, generating 3' termini of tRNAs. A 3'-hydroxy group is left at the tRNA terminus and a 5'-phosphoryl group is left at the trailer molecule.. In terms of biological role, zinc phosphodiesterase, which displays some tRNA 3'-processing endonuclease activity. Probably involved in tRNA maturation, by removing a 3'-trailer from precursor tRNA. In Anoxybacillus flavithermus (strain DSM 21510 / WK1), this protein is Ribonuclease Z.